We begin with the raw amino-acid sequence, 145 residues long: D-aminoacyl-tRNA deacylase (145 aa).

The short motif at glycine 137 to proline 138 is the Gly-cisPro motif, important for rejection of L-amino acids element.

Belongs to the DTD family. As to quaternary structure, homodimer.

It localises to the cytoplasm. The enzyme catalyses glycyl-tRNA(Ala) + H2O = tRNA(Ala) + glycine + H(+). It carries out the reaction a D-aminoacyl-tRNA + H2O = a tRNA + a D-alpha-amino acid + H(+). Its function is as follows. An aminoacyl-tRNA editing enzyme that deacylates mischarged D-aminoacyl-tRNAs. Also deacylates mischarged glycyl-tRNA(Ala), protecting cells against glycine mischarging by AlaRS. Acts via tRNA-based rather than protein-based catalysis; rejects L-amino acids rather than detecting D-amino acids in the active site. By recycling D-aminoacyl-tRNA to D-amino acids and free tRNA molecules, this enzyme counteracts the toxicity associated with the formation of D-aminoacyl-tRNA entities in vivo and helps enforce protein L-homochirality. This Pelobacter propionicus (strain DSM 2379 / NBRC 103807 / OttBd1) protein is D-aminoacyl-tRNA deacylase.